The primary structure comprises 134 residues: Retinol-binding protein 2 (134 aa).

Lys-41 and Gln-109 together coordinate all-trans-retinol.

The protein belongs to the calycin superfamily. Fatty-acid binding protein (FABP) family.

The protein localises to the cytoplasm. Its function is as follows. Intracellular transport of retinol. This chain is Retinol-binding protein 2 (RBP2), found in Sus scrofa (Pig).